A 239-amino-acid chain; its full sequence is Serine protease SplF (239 aa).

Residues 1-36 (MNKNIIIKSIAALTILTSITGVGTTVVDGIQQTAKA) form the signal peptide. Residues histidine 75, aspartate 114, and serine 192 each act as charge relay system in the active site.

The protein belongs to the peptidase S1B family.

It is found in the secreted. This is Serine protease SplF (splF) from Staphylococcus aureus (strain JH9).